Here is a 197-residue protein sequence, read N- to C-terminus: Translation machinery-associated protein 22 (197 aa).

In terms of domain architecture, SUI1 spans 103 to 174; that stretch reads IRIKRVERNK…DVREFLIKNY (72 aa).

This sequence belongs to the DENR family. In terms of assembly, interacts with the 40S ribosomal subunit.

The protein resides in the cytoplasm. The sequence is that of Translation machinery-associated protein 22 (tma22) from Botryotinia fuckeliana (strain B05.10) (Noble rot fungus).